A 370-amino-acid chain; its full sequence is Chaperone protein DnaJ (370 aa).

In terms of domain architecture, J spans 5–69 (DYYEVLGVDR…QKKAHYDQFG (65 aa)). The CR-type zinc-finger motif lies at 128 to 210 (GKETTIEIPR…CGGKGKVRKR (83 aa)). Zn(2+)-binding residues include Cys141, Cys144, Cys158, Cys161, Cys184, Cys187, Cys198, and Cys201. CXXCXGXG motif repeat units follow at residues 141–148 (CHTCSGSG), 158–165 (CPHCGGSG), 184–191 (CHHCEGTG), and 198–205 (CATCGGKG).

This sequence belongs to the DnaJ family. In terms of assembly, homodimer. The cofactor is Zn(2+).

The protein localises to the cytoplasm. In terms of biological role, participates actively in the response to hyperosmotic and heat shock by preventing the aggregation of stress-denatured proteins and by disaggregating proteins, also in an autonomous, DnaK-independent fashion. Unfolded proteins bind initially to DnaJ; upon interaction with the DnaJ-bound protein, DnaK hydrolyzes its bound ATP, resulting in the formation of a stable complex. GrpE releases ADP from DnaK; ATP binding to DnaK triggers the release of the substrate protein, thus completing the reaction cycle. Several rounds of ATP-dependent interactions between DnaJ, DnaK and GrpE are required for fully efficient folding. Also involved, together with DnaK and GrpE, in the DNA replication of plasmids through activation of initiation proteins. This is Chaperone protein DnaJ from Halalkalibacterium halodurans (strain ATCC BAA-125 / DSM 18197 / FERM 7344 / JCM 9153 / C-125) (Bacillus halodurans).